We begin with the raw amino-acid sequence, 441 residues long: Homoserine dehydrogenase (441 aa).

The NADP(+) site is built by asparagine 17 and valine 18. Positions 18 and 47 each coordinate NAD(+). NADPH is bound at residue valine 18. NADP(+) contacts are provided by arginine 49, arginine 50, and lysine 107. Arginine 49 contributes to the NADPH binding site. Lysine 107 is a binding site for NADPH. 4 residues coordinate Na(+): glutamate 131, valine 134, glycine 136, and isoleucine 138. The NADP(+) site is built by glycine 189 and glutamate 192. L-homoserine is bound by residues glutamate 192 and aspartate 203. Lysine 207 (proton donor) is an active-site residue. An NADP(+)-binding site is contributed by glycine 309. Glycine 309 is an NAD(+) binding site. Glycine 309 provides a ligand contact to NADPH. Residues 356-435 form the ACT domain; sequence YVSMNVADKP…VVQGVTSVLR (80 aa).

The protein belongs to the homoserine dehydrogenase family. Requires a metal cation as cofactor.

It carries out the reaction L-homoserine + NADP(+) = L-aspartate 4-semialdehyde + NADPH + H(+). The catalysed reaction is L-homoserine + NAD(+) = L-aspartate 4-semialdehyde + NADH + H(+). It participates in amino-acid biosynthesis; L-methionine biosynthesis via de novo pathway; L-homoserine from L-aspartate: step 3/3. Its pathway is amino-acid biosynthesis; L-threonine biosynthesis; L-threonine from L-aspartate: step 3/5. In terms of biological role, catalyzes the conversion of L-aspartate-beta-semialdehyde (L-Asa) to L-homoserine (L-Hse), the third step in the biosynthesis of threonine and methionine from aspartate. The protein is Homoserine dehydrogenase (hom) of Mycobacterium leprae (strain TN).